We begin with the raw amino-acid sequence, 359 residues long: Probable NAD(P)H nitroreductase PigM (359 aa).

It belongs to the nitroreductase family. Requires FMN as cofactor.

Its pathway is antibiotic biosynthesis; prodigiosin biosynthesis. In terms of biological role, involved in the biosynthesis of 4-methoxy-2,2'-bipyrrole-5-carbaldehyde (MBC), one of the terminal products involved in the biosynthesis of the red antibiotic prodigiosin (Pig). Catalyzes the oxidation of the hydroxy group of 4-hydroxy-2,2'-bipyrrole-5-methanol (HBM) to yield 4-methoxy-2,2'-bipyrrole-5-carbaldehyde (MBC). The sequence is that of Probable NAD(P)H nitroreductase PigM from Serratia sp. (strain ATCC 39006) (Prodigiosinella confusarubida).